A 483-amino-acid polypeptide reads, in one-letter code: GTPase Der (483 aa).

2 EngA-type G domains span residues 3-167 and 212-387; these read FTLA…GEER and LRIA…EIWN. Residues 9 to 16, 56 to 60, 119 to 122, 218 to 225, 265 to 269, and 330 to 333 contribute to the GTP site; these read GRPNVGKS, DTAGL, NKAE, GRPNAGKS, DTAGM, and NKWD. Residues 388-472 form the KH-like domain; the sequence is RRISTGRLNR…PIRLSLRTSD (85 aa).

This sequence belongs to the TRAFAC class TrmE-Era-EngA-EngB-Septin-like GTPase superfamily. EngA (Der) GTPase family. Associates with the 50S ribosomal subunit.

Its function is as follows. GTPase that plays an essential role in the late steps of ribosome biogenesis. The polypeptide is GTPase Der (Brucella melitensis biotype 2 (strain ATCC 23457)).